The primary structure comprises 279 residues: Acyl-[acyl-carrier-protein]--UDP-N-acetylglucosamine O-acyltransferase (279 aa).

Belongs to the transferase hexapeptide repeat family. LpxA subfamily. Homotrimer.

It is found in the cytoplasm. The catalysed reaction is a (3R)-hydroxyacyl-[ACP] + UDP-N-acetyl-alpha-D-glucosamine = a UDP-3-O-[(3R)-3-hydroxyacyl]-N-acetyl-alpha-D-glucosamine + holo-[ACP]. The protein operates within glycolipid biosynthesis; lipid IV(A) biosynthesis; lipid IV(A) from (3R)-3-hydroxytetradecanoyl-[acyl-carrier-protein] and UDP-N-acetyl-alpha-D-glucosamine: step 1/6. In terms of biological role, involved in the biosynthesis of lipid A, a phosphorylated glycolipid that anchors the lipopolysaccharide to the outer membrane of the cell. The protein is Acyl-[acyl-carrier-protein]--UDP-N-acetylglucosamine O-acyltransferase of Chlamydia pneumoniae (Chlamydophila pneumoniae).